Reading from the N-terminus, the 760-residue chain is Rho GTPase-activating protein 26 (760 aa).

The 256-residue stretch at 7 to 262 (EFSECCLDSP…MKENPHEHKN (256 aa)) folds into the BAR domain. Residues 265–369 (PYTMEGYLYV…WMEAMDGREP (105 aa)) form the PH domain. The Rho-GAP domain occupies 383–568 (AQLDSIGFSI…ILIENHEKIF (186 aa)). Disordered regions lie at residues 571–617 (VPET…ESRN) and 658–701 (PNRP…SPIS). The span at 605 to 617 (HTAQPNEKQESRN) shows a compositional bias: polar residues. Residues 674-701 (LSPSWPMFSAPSSPMPTSSTSSDSSPIS) are compositionally biased toward low complexity. An SH3 domain is found at 702 to 760 (SPLRKARALYACKAEHDSELSFTAGTVFDNVHPSQEPGWLEGTLNGKTGLIPENYVEFL).

In terms of assembly, binds to the C-terminus of PTK2/FAK1. As to expression, detected in embryonic brain and liver, and at low levels in embryonic eye, heart, lung, intestine and skeletal muscle.

Its subcellular location is the cell junction. The protein resides in the focal adhesion. The protein localises to the cytoplasm. It is found in the cytoskeleton. It localises to the endosome membrane. In terms of biological role, GTPase-activating protein for RHOA and CDC42. May be involved in the regulation of neosynthesized protein export through a Rab-endososomal dependent export route. The sequence is that of Rho GTPase-activating protein 26 (ARHGAP26) from Gallus gallus (Chicken).